Here is a 384-residue protein sequence, read N- to C-terminus: Probable endopolygalacturonase C (384 aa).

The first 19 residues, 1–19, serve as a signal peptide directing secretion; sequence MVRQLALACGLLAAVAVQA. The propeptide occupies 20 to 40; the sequence is APAEPAHPMVTEAPDASLLHK. Cys45 and Cys63 are oxidised to a cystine. PbH1 repeat units follow at residues 176 to 207 and 208 to 229; these read ATDL…DIGE and STDI…AINS. Asp222 (proton donor) is an active-site residue. Cys224 and Cys240 are disulfide-bonded. The active site involves His244. PbH1 repeat units lie at residues 254-280 and 288-310; these read RDDN…RIKA and ISDI…VIEQ. N-linked (GlcNAc...) asparagine glycosylation occurs at Asn261. 2 disulfide bridges follow: Cys349–Cys354 and Cys373–Cys382.

Belongs to the glycosyl hydrolase 28 family.

The protein resides in the secreted. It carries out the reaction (1,4-alpha-D-galacturonosyl)n+m + H2O = (1,4-alpha-D-galacturonosyl)n + (1,4-alpha-D-galacturonosyl)m.. Functionally, involved in maceration and soft-rotting of plant tissue. Hydrolyzes the 1,4-alpha glycosidic bonds of de-esterified pectate in the smooth region of the plant cell wall. This is Probable endopolygalacturonase C (pgaC) from Aspergillus aculeatus.